The sequence spans 782 residues: E3 ubiquitin-protein ligase SopA (782 aa).

The interval 136–171 (GVSVSANNRPTVSEGRTPPVSPSLSLQATSSPSSPA) is disordered. Residues 157–171 (PSLSLQATSSPSSPA) are compositionally biased toward low complexity. The active-site Glycyl thioester intermediate is the Cys753.

It belongs to the SopA E3 ligase family. Ubiquitinated in the presence of host E1 ubiquitin-activating enzyme, E2 ubiquitin-conjugating enzyme and ubiquitin.

The protein resides in the secreted. It is found in the host cell. The catalysed reaction is S-ubiquitinyl-[E2 ubiquitin-conjugating enzyme]-L-cysteine + [acceptor protein]-L-lysine = [E2 ubiquitin-conjugating enzyme]-L-cysteine + N(6)-ubiquitinyl-[acceptor protein]-L-lysine.. Functionally, effector proteins function to alter host cell physiology and promote bacterial survival in host tissues. This protein is an E3 ubiquitin ligase that interferes with host's ubiquitination pathway. For instance, prevents host innate immune response by ubiquitinating and thus sending to degradation host E3 ubiquitin ligases TRIM56 and TRIM65. The chain is E3 ubiquitin-protein ligase SopA (sopA) from Salmonella typhimurium (strain D23580).